A 272-amino-acid polypeptide reads, in one-letter code: Transcription factor PU.1 (272 aa).

Residues 126 to 165 are disordered; it reads SPAHQQSSDEEEGERQSPPLEVSDGEADGLEPGPGLLHGE. S142 and S148 each carry phosphoserine. Low complexity predominate over residues 155 to 165; it reads LEPGPGLLHGE. A DNA-binding region (ETS) is located at residues 172–255; sequence IRLYQFLLDL…VKKKLTYQFS (84 aa). Residues K219, R232, R235, and K245 each contribute to the DNA site.

Belongs to the ETS family. In terms of assembly, binds DNA as a monomer. Can form homomers. Directly interacts with CEBPD/NF-IL6-beta; this interaction does not affect DNA-binding properties of each partner. Interacts with NONO/p54(nrb). Interacts with RUNX1/AML1. Interacts with GFI1; the interaction represses SPI1 transcriptional activity, hence blocks SPI1-induced macrophage differentiation of myeloid progenitor cells. Interacts with CEBPE. Interacts with IRF4/Pip and IRF8. Interacts with JUN. Interacts with RB1. Interacts with TBP. In terms of tissue distribution, expressed in spleen, thymus and bone-marrow macrophages.

It is found in the nucleus. Its activity is regulated as follows. Transcriptional activity at macrophage-specific genes is inhibited by interaction with GFI1, which results in inhibition of SPI1-induced macrophage differentiation of myeloid progenitor cells, but not that of the granulocyte lineage. Its function is as follows. Pioneer transcription factor, which controls hematopoietic cell fate by decompacting stem cell heterochromatin and allowing other transcription factors to enter otherwise inaccessible genomic sites. Once in open chromatin, can directly control gene expression by binding genetic regulatory elements and can also more broadly influence transcription by recruiting transcription factors, such as interferon regulatory factors (IRFs), to otherwise inaccessible genomic regions. Transcriptionally activates genes important for myeloid and lymphoid lineages, such as CSF1R. Transcriptional activation from certain promoters, possibly containing low affinity binding sites, is achieved cooperatively with other transcription factors. FCER1A transactivation is achieved in cooperation with GATA1. May be particularly important for the pro- to pre-B cell transition. Binds (via the ETS domain) onto the purine-rich DNA core sequence 5'-GAGGAA-3', also known as the PU-box. In vitro can bind RNA and interfere with pre-mRNA splicing. This Mus musculus (Mouse) protein is Transcription factor PU.1 (Spi1).